The primary structure comprises 482 residues: Bifunctional protein GlmU (482 aa).

A pyrophosphorylase region spans residues 1-238 (MSAIRPAAVV…HREIAGINNR (238 aa)). UDP-N-acetyl-alpha-D-glucosamine-binding positions include 12-15 (LAAG), Lys26, Gln79, and 84-85 (GT). Residue Asp110 participates in Mg(2+) binding. UDP-N-acetyl-alpha-D-glucosamine contacts are provided by Gly147, Glu163, Asn178, and Asn236. Asn236 serves as a coordination point for Mg(2+). Residues 239–259 (VQLAEARRILNDRLLTRAMLA) are linker. An N-acetyltransferase region spans residues 260-482 (GVTVVDPATT…VASRKPEGED (223 aa)). UDP-N-acetyl-alpha-D-glucosamine is bound by residues Arg341 and Lys359. Catalysis depends on His371, which acts as the Proton acceptor. 2 residues coordinate UDP-N-acetyl-alpha-D-glucosamine: Tyr374 and Asn385. Acetyl-CoA is bound by residues Ala388, 394-395 (NY), Ser413, Ala431, and Arg448.

In the N-terminal section; belongs to the N-acetylglucosamine-1-phosphate uridyltransferase family. It in the C-terminal section; belongs to the transferase hexapeptide repeat family. As to quaternary structure, homotrimer. Requires Mg(2+) as cofactor.

The protein localises to the cytoplasm. It carries out the reaction alpha-D-glucosamine 1-phosphate + acetyl-CoA = N-acetyl-alpha-D-glucosamine 1-phosphate + CoA + H(+). It catalyses the reaction N-acetyl-alpha-D-glucosamine 1-phosphate + UTP + H(+) = UDP-N-acetyl-alpha-D-glucosamine + diphosphate. The protein operates within nucleotide-sugar biosynthesis; UDP-N-acetyl-alpha-D-glucosamine biosynthesis; N-acetyl-alpha-D-glucosamine 1-phosphate from alpha-D-glucosamine 6-phosphate (route II): step 2/2. Its pathway is nucleotide-sugar biosynthesis; UDP-N-acetyl-alpha-D-glucosamine biosynthesis; UDP-N-acetyl-alpha-D-glucosamine from N-acetyl-alpha-D-glucosamine 1-phosphate: step 1/1. It functions in the pathway bacterial outer membrane biogenesis; LPS lipid A biosynthesis. Functionally, catalyzes the last two sequential reactions in the de novo biosynthetic pathway for UDP-N-acetylglucosamine (UDP-GlcNAc). The C-terminal domain catalyzes the transfer of acetyl group from acetyl coenzyme A to glucosamine-1-phosphate (GlcN-1-P) to produce N-acetylglucosamine-1-phosphate (GlcNAc-1-P), which is converted into UDP-GlcNAc by the transfer of uridine 5-monophosphate (from uridine 5-triphosphate), a reaction catalyzed by the N-terminal domain. The chain is Bifunctional protein GlmU from Streptomyces avermitilis (strain ATCC 31267 / DSM 46492 / JCM 5070 / NBRC 14893 / NCIMB 12804 / NRRL 8165 / MA-4680).